Here is a 117-residue protein sequence, read N- to C-terminus: Probable non-functional immunoglobulin heavy variable 3-16 (117 aa).

The first 19 residues, 1–19 (MEFGLSWVFLAGILKGVQC), serve as a signal peptide directing secretion. The interval 20–44 (EVQLVESGGGLVQPGGSLRLSCAAS) is framework-1. Residues 21-117 (VQLVESGGGL…EDMAVYYCVR (97 aa)) enclose the Ig-like domain. A disulfide bridge connects residues C41 and C115. The complementarity-determining-1 stretch occupies residues 45–52 (GFTFSNSD). Residues 53 to 69 (MNWARKAPGKGLEWVSG) form a framework-2 region. The interval 70-77 (VSWNGSRT) is complementarity-determining-2. N-linked (GlcNAc...) asparagine glycosylation is present at N73. A framework-3 region spans residues 78 to 115 (HYVDSVKRRFIISRDNSRNSLYLQKNRRRAEDMAVYYC). The interval 116 to 117 (VR) is complementarity-determining-3.

In terms of assembly, immunoglobulins are composed of two identical heavy chains and two identical light chains; disulfide-linked.

The protein localises to the secreted. It is found in the cell membrane. In terms of biological role, probable non-functional open reading frame (ORF) of V region of the variable domain of immunoglobulin heavy chains. Non-functional ORF generally cannot participate in the synthesis of a productive immunoglobulin chain due to altered V-(D)-J or switch recombination and/or splicing site (at mRNA level) and/or conserved amino acid change (protein level). Immunoglobulins, also known as antibodies, are membrane-bound or secreted glycoproteins produced by B lymphocytes. In the recognition phase of humoral immunity, the membrane-bound immunoglobulins serve as receptors which, upon binding of a specific antigen, trigger the clonal expansion and differentiation of B lymphocytes into immunoglobulins-secreting plasma cells. Secreted immunoglobulins mediate the effector phase of humoral immunity, which results in the elimination of bound antigens. The antigen binding site is formed by the variable domain of one heavy chain, together with that of its associated light chain. Thus, each immunoglobulin has two antigen binding sites with remarkable affinity for a particular antigen. The variable domains are assembled by a process called V-(D)-J rearrangement and can then be subjected to somatic hypermutations which, after exposure to antigen and selection, allow affinity maturation for a particular antigen. The polypeptide is Probable non-functional immunoglobulin heavy variable 3-16 (Homo sapiens (Human)).